The primary structure comprises 447 residues: MDLRRIMETVNMIDNENLDLRTTTMGISLLDCIDSDSDRACQKIYDKITTKAENLVKVARELETEYGIPIANKRITVTPISLIAAASGDSDYVKYAVTLDKAAKAVGVDLIGGFSALVHKGYQNGDRVLIKSIPQALKETERVCSSVNVGSTRSGINMDAVKEMGQIVIENEKINPLNNGNLVIFCNAVEDNPFMAGGFHGVGESDVALNVGVSGPGVVKTALEKVKGESMDVVAETIKQTAFKVTRMGQLVGQEASKRLGVDFGIVDLSLAPTPAQGDSVANILEEIGLESVGTHGTTAALAMLNDAVKKGGIMACSHVGGLSGAFIPESEDAGMIAAAEKGILTVDKLEAMTAVCSVGLDMIAVPGDTPAETISAMIADEAAIGMINNKTTAVRVIPVPGKDVGDSIEFGGLFGYAPIMPVHKESSAAMINRGGRIPAPVHSFKN.

Belongs to the UPF0210 family. Homodimer.

The protein is UPF0210 protein LBUL_0934 of Lactobacillus delbrueckii subsp. bulgaricus (strain ATCC BAA-365 / Lb-18).